Reading from the N-terminus, the 293-residue chain is Iron-sulfur cluster transfer protein Nubpl (293 aa).

A CXXC motif probably involved in coordinating iron-sulfur cluster binding region spans residues C214–C217.

It belongs to the Mrp/NBP35 ATP-binding proteins family. Homodimer; dimerization is not reliant on iron-sulfur cluster binding. [4Fe-4S] cluster is required as a cofactor.

It is found in the mitochondrion membrane. Iron-sulfur cluster transfer protein involved in the assembly of the mitochondrial membrane respiratory chain NADH dehydrogenase (Complex I). May deliver one or more Fe-S clusters to complex I subunits. Alleviates pausing in mitochondrial DNA (mtDNA) replication at slow zone 2. May be involved in mtDNA-helicase-mediated mtDNA unwinding and replication by transferring iron-sulfur clusters. The protein is Iron-sulfur cluster transfer protein Nubpl of Drosophila melanogaster (Fruit fly).